A 1265-amino-acid polypeptide reads, in one-letter code: Kinesin-like protein Klp98A (1265 aa).

The Kinesin motor domain maps to 3 to 364 (SLKVAVRVRP…LRYANRAKNI (362 aa)). 100–107 (GQTGSGKT) contacts ATP. 3 disordered regions span residues 597–621 (GASP…DPEL), 828–864 (EAES…DVSK), and 884–954 (VSSP…CTPS). 2 coiled-coil regions span residues 619–670 (PELQ…EEMD) and 768–848 (AQFI…LGNK). 3 stretches are compositionally biased toward polar residues: residues 846 to 857 (GNKSMSTSTSTN), 884 to 901 (VSSP…SNCS), and 917 to 927 (SGSSEETSRTC). Gly residues predominate over residues 933-946 (SGSGSGSVGIGGSG). Residues 1035–1071 (DLNKAQLDEHIADLQDLQRRYIQMEQEMLQSVQDLEA) adopt a coiled-coil conformation. Positions 1129–1259 (GEHFITIPSF…SFFKKGLFEN (131 aa)) constitute a PX domain.

It belongs to the TRAFAC class myosin-kinesin ATPase superfamily. Kinesin family. As to quaternary structure, interacts with Atg8a and Rab14.

It localises to the early endosome. In terms of biological role, plus end-directed motor protein involved in asymmetric cell division of sensory organ precursor (SOP) cells by playing a role in the asymmetric localization of Sara-expressing endosomes to the pIIa daughter cell but not to the pIIb cell. Targets Sara-expressing endosomes to the central spindle which is symmetrically arranged in early cell division. During late cytokinesis, central spindle asymmetry is generated by enrichment of Patronin on the pIIb side which protects microtubules from depolymerization by Klp10A while unprotected microtubules on the pIIa side are disassembled by Klp10A, leading to the asymmetric delivery of Sara-expressing endosomes to the pIIa daughter cell. Also plays a role in regulation of autophagosome formation, fusion and positioning and is required for normal localization of Rab14. The protein is Kinesin-like protein Klp98A of Drosophila melanogaster (Fruit fly).